The chain runs to 402 residues: Type II NADH:quinone oxidoreductase (402 aa).

FAD-binding positions include 12-16 (GAGYA), 39-40 (NK), and Val83. Glu172 is an active-site residue. Residues Asp302, 319 to 320 (AQ), and Lys379 contribute to the FAD site.

It belongs to the NADH dehydrogenase family. The cofactor is FAD.

Its subcellular location is the cell membrane. The enzyme catalyses a quinone + NADH + H(+) = a quinol + NAD(+). Its function is as follows. Alternative, nonproton pumping NADH:quinone oxidoreductase that delivers electrons to the respiratory chain by oxidation of NADH and reduction of quinones, and contributes to the regeneration of NAD(+). The chain is Type II NADH:quinone oxidoreductase from Staphylococcus aureus (strain MSSA476).